Consider the following 116-residue polypeptide: Non-specific lipid-transfer protein 1 (116 aa).

Residues 1-25 form the signal peptide; the sequence is MARAQLVLVALVAALLLAAPHAAVA. Cystine bridges form between C28-C75, C38-C52, C53-C98, and C73-C112.

It belongs to the plant LTP family. Aleurone (external part) of the seeds.

Plant non-specific lipid-transfer proteins transfer phospholipids as well as galactolipids across membranes. May play a role in wax or cutin deposition in the cell walls of expanding epidermal cells and certain secretory tissues. This chain is Non-specific lipid-transfer protein 1 (LTP), found in Oryza sativa subsp. indica (Rice).